Consider the following 508-residue polypeptide: Anaerobic nitric oxide reductase transcription regulator NorR (508 aa).

Residue Asp56 is modified to 4-aspartylphosphate. Positions 186-415 (MIGQSPAMAR…LEHAIHRAAV (230 aa)) constitute a Sigma-54 factor interaction domain. ATP contacts are provided by residues 214–221 (GETGVGKE) and 277–286 (ADQGTLFLDE). The segment at residues 483–502 (WAATARALELDSGNLHRLAK) is a DNA-binding region (H-T-H motif).

The protein operates within nitrogen metabolism; nitric oxide reduction. Required for the expression of anaerobic nitric oxide (NO) reductase, acts as a transcriptional activator for at least the norVW operon. Activation also requires sigma-54. The sequence is that of Anaerobic nitric oxide reductase transcription regulator NorR from Aeromonas hydrophila subsp. hydrophila (strain ATCC 7966 / DSM 30187 / BCRC 13018 / CCUG 14551 / JCM 1027 / KCTC 2358 / NCIMB 9240 / NCTC 8049).